The primary structure comprises 530 residues: Nectin-2 (530 aa).

An N-terminal signal peptide occupies residues 1–31 (MARAAVLPPSRLSPTLPLLPLLLLLLQETGA). The region spanning 32-147 (QDVRVRVLPE…NGTRRGVTWL (116 aa)) is the Ig-like V-type domain. At 32 to 351 (QDVRVRVLPE…STAGAGATGG (320 aa)) the chain is on the extracellular side. Cysteines 54 and 131 form a disulfide. N-linked (GlcNAc...) asparagine glycans are attached at residues N128 and N138. 2 Ig-like C2-type domains span residues 153–247 (PENH…VTLS) and 252–337 (PEVS…VILV). 2 cysteine pairs are disulfide-bonded: C174–C229 and C274–C320. N315 carries an N-linked (GlcNAc...) asparagine glycan. Residues 352–372 (IIGGIIAAIIATAVAGTGILI) traverse the membrane as a helical segment. Topologically, residues 373 to 530 (CRQQRKEQRL…DFFVSRAMYV (158 aa)) are cytoplasmic. The segment at 382 to 407 (LQAADEEEELEGPPSYKPPTPKAKLE) is disordered. Residue T401 is modified to Phosphothreonine. Position 424 is a phosphoserine (S424).

It belongs to the nectin family. As to quaternary structure, can form trans-heterodimers with NECTIN3. Interacts with CD226 or with PVRIG; these interactions are competitive and have a differential functional outcome on T-cell activation, either positive or negative, respectively. Binds with low affinity to TIGIT. Brain, spinal cord, spleen, kidney, heart and liver.

It is found in the cell membrane. In terms of biological role, modulator of T-cell signaling. Can be either a costimulator of T-cell function, or a coinhibitor, depending on the receptor it binds to. Upon binding to CD226, stimulates T-cell proliferation and cytokine production, including that of IL2, IL5, IL10, IL13, and IFNG. Upon interaction with PVRIG, inhibits T-cell proliferation. These interactions are competitive. Probable cell adhesion protein. The chain is Nectin-2 from Mus musculus (Mouse).